The sequence spans 184 residues: Fe/S biogenesis protein NfuA (184 aa).

[4Fe-4S] cluster contacts are provided by Cys-142 and Cys-145.

This sequence belongs to the NfuA family. As to quaternary structure, homodimer. [4Fe-4S] cluster serves as cofactor.

Its function is as follows. Involved in iron-sulfur cluster biogenesis. Binds a 4Fe-4S cluster, can transfer this cluster to apoproteins, and thereby intervenes in the maturation of Fe/S proteins. Could also act as a scaffold/chaperone for damaged Fe/S proteins. This Wigglesworthia glossinidia brevipalpis protein is Fe/S biogenesis protein NfuA.